We begin with the raw amino-acid sequence, 208 residues long: Large ribosomal subunit protein uL3 (208 aa).

Residues His124–Pro146 are disordered.

The protein belongs to the universal ribosomal protein uL3 family. In terms of assembly, part of the 50S ribosomal subunit. Forms a cluster with proteins L14 and L19.

Functionally, one of the primary rRNA binding proteins, it binds directly near the 3'-end of the 23S rRNA, where it nucleates assembly of the 50S subunit. This is Large ribosomal subunit protein uL3 from Streptococcus thermophilus (strain ATCC BAA-491 / LMD-9).